The primary structure comprises 461 residues: Putative cytochrome P450 132 (461 aa).

Cys409 serves as a coordination point for heme.

The protein belongs to the cytochrome P450 family. Heme serves as cofactor.

In Mycobacterium bovis (strain ATCC BAA-935 / AF2122/97), this protein is Putative cytochrome P450 132 (cyp132).